The chain runs to 583 residues: Protein translocase subunit SecD (583 aa).

6 helical membrane passes run 7–27, 419–439, 446–468, 469–489, 511–531, and 538–558; these read FGVVLVVLAACSGFLFPTLQW, LVWGLCAVLLFMLVWYQEAGV, LLNLYIMFGVLSAFNLTLTLSSI, AGMILTIGMAVDANVVVFERI, FWAIMDSNVTTFIAALFLSVL, and GFAYSLAIGVVSSVFTALFVS.

It belongs to the SecD/SecF family. SecD subfamily. In terms of assembly, forms a complex with SecF. Part of the essential Sec protein translocation apparatus which comprises SecA, SecYEG and auxiliary proteins SecDF. Other proteins may also be involved.

Its subcellular location is the cell inner membrane. In terms of biological role, part of the Sec protein translocase complex. Interacts with the SecYEG preprotein conducting channel. SecDF uses the proton motive force (PMF) to complete protein translocation after the ATP-dependent function of SecA. This Treponema pallidum (strain Nichols) protein is Protein translocase subunit SecD.